The sequence spans 312 residues: Taste receptor type 2 member 7 (312 aa).

Over 1-9 the chain is Extracellular; the sequence is MTYETDTTL. A helical membrane pass occupies residues 10 to 30; sequence MFVAVCEALVGILGNAFIALV. At 31-49 the chain is on the cytoplasmic side; that stretch reads NFMGWMKNRKITAIDLILS. A helical membrane pass occupies residues 50 to 70; sequence SLAMSRICLQCIILLDCIILV. Over 71 to 101 the chain is Extracellular; that stretch reads QYPDTYNRGKEMRIIDFFWTLTNHLSVWFAT. Residues 102-122 traverse the membrane as a helical segment; it reads CLSIFYFFKIANFFHPLFLWI. Residues 123–128 are Cytoplasmic-facing; that stretch reads KWRIDK. Residues 129–149 traverse the membrane as a helical segment; sequence LILRTLLACLILSLCFSLPVT. The Extracellular segment spans residues 150-187; the sequence is ENLTDDFRRCVKTKERINSTLRCKLNKAGYASVKVNLN. N-linked (GlcNAc...) asparagine glycans are attached at residues Asn151 and Asn167. Residues 188–208 traverse the membrane as a helical segment; that stretch reads LVMLFPFSVSLVSFLLLILSL. The Cytoplasmic portion of the chain corresponds to 209–235; it reads WRHTRQMQLNVTGYNDPSTTAHVKATK. The helical transmembrane segment at 236–256 threads the bilayer; sequence AVISFLVLFIVYCLAFLIATS. Residues 257–266 lie on the Extracellular side of the membrane; the sequence is SYFMPESELA. Residues 267 to 287 traverse the membrane as a helical segment; it reads VIWGELIALIYPSSHSFILIL. Over 288 to 312 the chain is Cytoplasmic; the sequence is GNSKLKQASVRVLCRVKTMLKGRKY.

The protein belongs to the G-protein coupled receptor T2R family. As to expression, expressed in subsets of taste receptor cells of the tongue and palate epithelium and exclusively in gustducin-positive cells. Expressed in 15% taste bud cells in circumvallate and foliate papillae but only in 2% in fungiform papillae. Expressed in the duodenum, antrum and fundus (part of the stomach) and in gastric endocrine cells.

Its subcellular location is the membrane. Its function is as follows. Gustducin-coupled receptor implicated in the perception of bitter compounds in the oral cavity and the gastrointestinal tract. Signals through PLCB2 and the calcium-regulated cation channel TRPM5. This chain is Taste receptor type 2 member 7 (Tas2r7), found in Rattus norvegicus (Rat).